Consider the following 344-residue polypeptide: N-acetyl-gamma-glutamyl-phosphate reductase (344 aa).

Cys-150 is a catalytic residue.

This sequence belongs to the NAGSA dehydrogenase family. Type 1 subfamily.

The protein resides in the cytoplasm. It carries out the reaction N-acetyl-L-glutamate 5-semialdehyde + phosphate + NADP(+) = N-acetyl-L-glutamyl 5-phosphate + NADPH + H(+). It participates in amino-acid biosynthesis; L-arginine biosynthesis; N(2)-acetyl-L-ornithine from L-glutamate: step 3/4. Functionally, catalyzes the NADPH-dependent reduction of N-acetyl-5-glutamyl phosphate to yield N-acetyl-L-glutamate 5-semialdehyde. The chain is N-acetyl-gamma-glutamyl-phosphate reductase from Pseudomonas fluorescens (strain SBW25).